We begin with the raw amino-acid sequence, 734 residues long: Photosystem I P700 chlorophyll a apoprotein A2 (734 aa).

Helical transmembrane passes span 46 to 69 (IFAS…FHVA), 135 to 158 (LYTG…LHLQ), 175 to 199 (LNHH…HVAI), 273 to 291 (IAHH…GHMY), 330 to 353 (LHFQ…QHMY), 369 to 395 (AALY…IFFI), 417 to 439 (AIIS…LYVH), and 517 to 535 (FLVH…LILV). C559 and C568 together coordinate [4Fe-4S] cluster. 2 helical membrane passes run 575–596 (AFYL…YWHW) and 643–665 (LSVW…MFLI). 3 residues coordinate chlorophyll a: H654, M662, and Y670. Residue W671 participates in phylloquinone binding. Residues 707–727 (LVGLAHFSVGYIFTYAAFLIA) form a helical membrane-spanning segment.

Belongs to the PsaA/PsaB family. In terms of assembly, the PsaA/B heterodimer binds the P700 chlorophyll special pair and subsequent electron acceptors. PSI consists of a core antenna complex that captures photons, and an electron transfer chain that converts photonic excitation into a charge separation. The eukaryotic PSI reaction center is composed of at least 11 subunits. The cofactor is P700 is a chlorophyll a/chlorophyll a' dimer, A0 is one or more chlorophyll a, A1 is one or both phylloquinones and FX is a shared 4Fe-4S iron-sulfur center..

The protein resides in the plastid. Its subcellular location is the chloroplast thylakoid membrane. The catalysed reaction is reduced [plastocyanin] + hnu + oxidized [2Fe-2S]-[ferredoxin] = oxidized [plastocyanin] + reduced [2Fe-2S]-[ferredoxin]. Its function is as follows. PsaA and PsaB bind P700, the primary electron donor of photosystem I (PSI), as well as the electron acceptors A0, A1 and FX. PSI is a plastocyanin-ferredoxin oxidoreductase, converting photonic excitation into a charge separation, which transfers an electron from the donor P700 chlorophyll pair to the spectroscopically characterized acceptors A0, A1, FX, FA and FB in turn. Oxidized P700 is reduced on the lumenal side of the thylakoid membrane by plastocyanin. This chain is Photosystem I P700 chlorophyll a apoprotein A2, found in Zygnema circumcarinatum (Green alga).